A 116-amino-acid polypeptide reads, in one-letter code: Small ribosomal subunit protein uS8c (116 aa).

This sequence belongs to the universal ribosomal protein uS8 family. As to quaternary structure, part of the 30S ribosomal subunit.

It is found in the plastid. It localises to the chloroplast. One of the primary rRNA binding proteins, it binds directly to 16S rRNA central domain where it helps coordinate assembly of the platform of the 30S subunit. This chain is Small ribosomal subunit protein uS8c (rps8), found in Musa acuminata (Banana).